The following is a 196-amino-acid chain: Rho-related protein racL (196 aa).

GTP is bound at residue Gly-10–Thr-17. The Effector region motif lies at Tyr-32–Phe-40. GTP contacts are provided by residues Asp-57–Gln-61 and Thr-116–Asp-119. Cys-193 is modified (cysteine methyl ester). The S-geranylgeranyl cysteine moiety is linked to residue Cys-193. The propeptide at Ile-194 to Leu-196 is removed in mature form.

This sequence belongs to the small GTPase superfamily. Rho family.

It localises to the cell membrane. The chain is Rho-related protein racL (racL) from Dictyostelium discoideum (Social amoeba).